A 156-amino-acid polypeptide reads, in one-letter code: Small ribosomal subunit protein uS7 (156 aa).

It belongs to the universal ribosomal protein uS7 family. Part of the 30S ribosomal subunit. Contacts proteins S9 and S11.

In terms of biological role, one of the primary rRNA binding proteins, it binds directly to 16S rRNA where it nucleates assembly of the head domain of the 30S subunit. Is located at the subunit interface close to the decoding center, probably blocks exit of the E-site tRNA. The polypeptide is Small ribosomal subunit protein uS7 (Sorangium cellulosum (strain So ce56) (Polyangium cellulosum (strain So ce56))).